Here is a 539-residue protein sequence, read N- to C-terminus: uncharacterized protein (539 aa).

The protein belongs to the transposase 25 family.

This is an uncharacterized protein from Sinorhizobium fredii (strain NBRC 101917 / NGR234).